The following is a 236-amino-acid chain: Ubiquinone biosynthesis O-methyltransferase (236 aa).

Positions 39, 59, 80, and 124 each coordinate S-adenosyl-L-methionine.

Belongs to the methyltransferase superfamily. UbiG/COQ3 family.

The enzyme catalyses a 3-demethylubiquinol + S-adenosyl-L-methionine = a ubiquinol + S-adenosyl-L-homocysteine + H(+). It catalyses the reaction a 3-(all-trans-polyprenyl)benzene-1,2-diol + S-adenosyl-L-methionine = a 2-methoxy-6-(all-trans-polyprenyl)phenol + S-adenosyl-L-homocysteine + H(+). It participates in cofactor biosynthesis; ubiquinone biosynthesis. In terms of biological role, O-methyltransferase that catalyzes the 2 O-methylation steps in the ubiquinone biosynthetic pathway. The protein is Ubiquinone biosynthesis O-methyltransferase of Shewanella sp. (strain ANA-3).